Consider the following 243-residue polypeptide: Protein Thf1 (243 aa).

Residues Ser180–Leu224 adopt a coiled-coil conformation. The span at Glu210–Glu220 shows a compositional bias: basic and acidic residues. Positions Glu210–Ser243 are disordered. Over residues Ser221–Ser243 the composition is skewed to polar residues.

This sequence belongs to the THF1 family.

Its function is as follows. May be involved in photosynthetic membrane biogenesis. This chain is Protein Thf1, found in Prochlorococcus marinus (strain MIT 9313).